Consider the following 453-residue polypeptide: tRNA modification GTPase MnmE (453 aa).

(6S)-5-formyl-5,6,7,8-tetrahydrofolate-binding residues include Arg22, Glu79, and Lys119. A TrmE-type G domain is found at 215 to 376; it reads GMKVVIAGRP…LKQHLKSLMG (162 aa). Asn225 contacts K(+). GTP contacts are provided by residues 225–230, 244–250, 269–272, and 334–337; these read NAGKSS, TEIAGTT, DTAG, and NKAD. Ser229 serves as a coordination point for Mg(2+). K(+) contacts are provided by Thr244, Ile246, and Thr249. Thr250 lines the Mg(2+) pocket. Lys453 lines the (6S)-5-formyl-5,6,7,8-tetrahydrofolate pocket.

The protein belongs to the TRAFAC class TrmE-Era-EngA-EngB-Septin-like GTPase superfamily. TrmE GTPase family. Homodimer. Heterotetramer of two MnmE and two MnmG subunits. Requires K(+) as cofactor.

The protein localises to the cytoplasm. Functionally, exhibits a very high intrinsic GTPase hydrolysis rate. Involved in the addition of a carboxymethylaminomethyl (cmnm) group at the wobble position (U34) of certain tRNAs, forming tRNA-cmnm(5)s(2)U34. The polypeptide is tRNA modification GTPase MnmE (Shewanella sp. (strain MR-7)).